The sequence spans 108 residues: Iron-sulfur cluster assembly protein CyaY (108 aa).

It belongs to the frataxin family.

Involved in iron-sulfur (Fe-S) cluster assembly. May act as a regulator of Fe-S biogenesis. The protein is Iron-sulfur cluster assembly protein CyaY of Pseudomonas aeruginosa (strain ATCC 15692 / DSM 22644 / CIP 104116 / JCM 14847 / LMG 12228 / 1C / PRS 101 / PAO1).